The primary structure comprises 265 residues: Zearalenone hydrolase (265 aa).

Residues glycine 35, serine 105, and serine 106 each contribute to the zearalenone site. The active site involves serine 105. Glutamate 129 is a catalytic residue. Zearalenone is bound by residues tryptophan 185, tyrosine 189, and histidine 243. The active site involves histidine 243.

Belongs to the AB hydrolase superfamily. Hydrolase RutD family. In terms of assembly, homodimer.

The catalysed reaction is zearalenone + H2O = hydrolyzed zearalenone + H(+). Lactonohydrolase that specifically hydrolyzes zearalenone (ZEN), an oestrogenic mycotoxin produced by numerous Fusarium specie, into a non-toxic alkylresorcinol product. This Cladophialophora bantiana (strain ATCC 10958 / CDC1940 / 8579 / CBS 173.52) (Xylohypha bantiana) protein is Zearalenone hydrolase.